A 156-amino-acid polypeptide reads, in one-letter code: Ribosomal RNA large subunit methyltransferase H (156 aa).

S-adenosyl-L-methionine is bound by residues leucine 74, glycine 105, and 124–129 (LSKLTL).

Belongs to the RNA methyltransferase RlmH family. In terms of assembly, homodimer.

It is found in the cytoplasm. It catalyses the reaction pseudouridine(1915) in 23S rRNA + S-adenosyl-L-methionine = N(3)-methylpseudouridine(1915) in 23S rRNA + S-adenosyl-L-homocysteine + H(+). Functionally, specifically methylates the pseudouridine at position 1915 (m3Psi1915) in 23S rRNA. The polypeptide is Ribosomal RNA large subunit methyltransferase H (Legionella pneumophila (strain Paris)).